A 293-amino-acid polypeptide reads, in one-letter code: Protease HtpX homolog (293 aa).

A run of 2 helical transmembrane segments spans residues 6–26 and 28–48; these read VAVM…LIGG and SGMV…YWNS. Histidine 130 serves as a coordination point for Zn(2+). Residue glutamate 131 is part of the active site. Zn(2+) is bound at residue histidine 134. Transmembrane regions (helical) follow at residues 145 to 165 and 172 to 192; these read LTAT…FFGG and PLGA…AMMV. Glutamate 201 contacts Zn(2+).

Belongs to the peptidase M48B family. It depends on Zn(2+) as a cofactor.

It is found in the cell inner membrane. In Rhodospirillum rubrum (strain ATCC 11170 / ATH 1.1.1 / DSM 467 / LMG 4362 / NCIMB 8255 / S1), this protein is Protease HtpX homolog.